Consider the following 340-residue polypeptide: Mitochondrial carrier protein CoAc1 (340 aa).

6 consecutive transmembrane segments (helical) span residues 22–42 (ALDL…AGAF), 85–105 (FYKG…LHYM), 130–147 (LLAG…TYPL), 199–219 (GVGP…YIYE), 237–257 (LSCG…LDVV), and 297–317 (FAGL…GFTT). 3 Solcar repeats span residues 27 to 113 (PVYA…YRCW), 124 to 224 (TGPV…LKSQ), and 231 to 324 (DSVI…MKAL).

This sequence belongs to the mitochondrial carrier (TC 2.A.29) family. Expressed throughout the plant.

It is found in the mitochondrion inner membrane. Functionally, required for the accumulation of coenzyme A in the mitochondrial matrix. The chain is Mitochondrial carrier protein CoAc1 from Zea mays (Maize).